We begin with the raw amino-acid sequence, 408 residues long: Acetate kinase (408 aa).

Residue Asn7 coordinates Mg(2+). Position 14 (Lys14) interacts with ATP. Substrate is bound at residue Arg91. Catalysis depends on Asp148, which acts as the Proton donor/acceptor. ATP contacts are provided by residues 208–212 (HLGNG), 283–285 (DFR), and 331–335 (GIGEN). Glu384 lines the Mg(2+) pocket.

Belongs to the acetokinase family. In terms of assembly, homodimer. Mg(2+) serves as cofactor. Mn(2+) is required as a cofactor.

It is found in the cytoplasm. The catalysed reaction is acetate + ATP = acetyl phosphate + ADP. The protein operates within metabolic intermediate biosynthesis; acetyl-CoA biosynthesis; acetyl-CoA from acetate: step 1/2. Its function is as follows. Catalyzes the formation of acetyl phosphate from acetate and ATP. Can also catalyze the reverse reaction. This Methanosarcina mazei (Methanosarcina frisia) protein is Acetate kinase.